A 426-amino-acid chain; its full sequence is Glutamate-1-semialdehyde 2,1-aminomutase (426 aa).

Lysine 265 is modified (N6-(pyridoxal phosphate)lysine).

It belongs to the class-III pyridoxal-phosphate-dependent aminotransferase family. HemL subfamily. Homodimer. It depends on pyridoxal 5'-phosphate as a cofactor.

Its subcellular location is the cytoplasm. It catalyses the reaction (S)-4-amino-5-oxopentanoate = 5-aminolevulinate. It participates in porphyrin-containing compound metabolism; protoporphyrin-IX biosynthesis; 5-aminolevulinate from L-glutamyl-tRNA(Glu): step 2/2. The protein is Glutamate-1-semialdehyde 2,1-aminomutase of Alcanivorax borkumensis (strain ATCC 700651 / DSM 11573 / NCIMB 13689 / SK2).